Reading from the N-terminus, the 227-residue chain is Pectinesterase inhibitor 28 (227 aa).

The signal sequence occupies residues 1–25 (MASSMAPAAAMAILLLALLMPATLC). Residues 28–50 (SGPPSSKHGHGGHAKRAPPPASP) are disordered. Over residues 34–43 (KHGHGGHAKR) the composition is skewed to basic residues. Cysteine 66 and cysteine 75 are oxidised to a cystine. Residues asparagine 67, asparagine 104, and asparagine 117 are each glycosylated (N-linked (GlcNAc...) asparagine). Cysteine 139 and cysteine 179 are joined by a disulfide.

It belongs to the PMEI family. In terms of tissue distribution, expressed in roots, leaves, culms and flag leaves.

Its subcellular location is the secreted. It localises to the extracellular space. The protein localises to the apoplast. In terms of biological role, pectin methylesterase (PME) inhibitor that inhibits PME in vitro. Functions as a critical structural modulator by regulating the degree of pectin methylesterification and the physiochemical properties of the cell wall components. This Oryza sativa subsp. japonica (Rice) protein is Pectinesterase inhibitor 28.